The primary structure comprises 111 residues: Universal stress protein B (111 aa).

Transmembrane regions (helical) follow at residues 1–21 and 90–110; these read MINT…NMLR and FILT…LMLW.

Belongs to the universal stress protein B family.

Its subcellular location is the cell inner membrane. The sequence is that of Universal stress protein B from Edwardsiella ictaluri (strain 93-146).